The following is a 512-amino-acid chain: Ribonuclease Y (512 aa).

The chain crosses the membrane as a helical span at residues 3 to 23 (FQIILVVIISALVGLVIGFFI). A KH domain is found at 202–265 (TVAVIPLPND…EVARLALERL (64 aa)). The 94-residue stretch at 328 to 421 (VLKHSIEVCH…VQAADAISAA (94 aa)) folds into the HD domain.

It belongs to the RNase Y family.

The protein resides in the cell membrane. Functionally, endoribonuclease that initiates mRNA decay. This is Ribonuclease Y from Desulforamulus reducens (strain ATCC BAA-1160 / DSM 100696 / MI-1) (Desulfotomaculum reducens).